The chain runs to 475 residues: MSPQTETKASVGFKAGVKDYKLTYYTPDYQTKDTDILAAFRVTPQPGVPPEEAGAAVAAESSTGTWRTVWTDGLTSLDRYKGRCYHIEPVAGEENQFIAYVAYPLDLFEEGSVTNMFTSIVGNVFGFKALRALRLEDLRIPTSYSKTFQGPPHGIQVERDKLNKYGRPLLGCTIKPKLGLSAKNYGRAVYECLRGGLDFTKDDENVNSQPFMRWRDRFLFCAEAIYKAQAETGEIKGHYLNATAGTCEEMIKRAVFARELGVPIVMHDYLTGGFTANTSLAHYCRDNGLLLHIHRAMHAVIDRQKNHGIHFRVLAKALRMSGGDHIHAGTVVGKLEGEREITLGFVDLLRDDYIEKDRSRGIYFTQDWVSLPGVLPVASGGIHVWHMPALTEIFGDDSVLQFGGGTLGHPWGNAPGAVANRVALEACVQARNEGRDLAREGNEIIREAAKWSPELAAACEVWKEIKFEFPAMDTL.

The propeptide occupies 1 to 2; that stretch reads MS. N-acetylproline is present on proline 3. Lysine 14 is modified (N6,N6,N6-trimethyllysine). Substrate is bound by residues asparagine 123 and threonine 173. The Proton acceptor role is filled by lysine 175. Substrate is bound at residue lysine 177. Mg(2+) is bound by residues lysine 201, aspartate 203, and glutamate 204. Lysine 201 is subject to N6-carboxylysine. Histidine 294 serves as the catalytic Proton acceptor. Substrate-binding residues include arginine 295, histidine 327, and serine 379.

This sequence belongs to the RuBisCO large chain family. Type I subfamily. As to quaternary structure, heterohexadecamer of 8 large chains and 8 small chains; disulfide-linked. The disulfide link is formed within the large subunit homodimers. Mg(2+) serves as cofactor. The disulfide bond which can form in the large chain dimeric partners within the hexadecamer appears to be associated with oxidative stress and protein turnover.

The protein localises to the plastid. It is found in the chloroplast. The enzyme catalyses 2 (2R)-3-phosphoglycerate + 2 H(+) = D-ribulose 1,5-bisphosphate + CO2 + H2O. The catalysed reaction is D-ribulose 1,5-bisphosphate + O2 = 2-phosphoglycolate + (2R)-3-phosphoglycerate + 2 H(+). In terms of biological role, ruBisCO catalyzes two reactions: the carboxylation of D-ribulose 1,5-bisphosphate, the primary event in carbon dioxide fixation, as well as the oxidative fragmentation of the pentose substrate in the photorespiration process. Both reactions occur simultaneously and in competition at the same active site. The chain is Ribulose bisphosphate carboxylase large chain from Castanea sativa (Sweet chestnut).